We begin with the raw amino-acid sequence, 345 residues long: Krueppel-like factor 3 (345 aa).

Positions 1–74 (MLMFDPVPVK…TVNKRSSPPS (74 aa)) are repressor domain. Residue lysine 10 forms a Glycyl lysine isopeptide (Lys-Gly) (interchain with G-Cter in SUMO) linkage. The short motif at 60 to 68 (EPVDLTVNK) is the 9aaTAD; inactive element. A CTBP-binding motif motif is present at residues 61–65 (PVDLT). The tract at residues 66–112 (VNKRSSPPSAGNSPSSLKFPSSHRRASPGLSMPSSSPPIKKYSPPSP) is disordered. Lysine 68 participates in a covalent cross-link: Glycyl lysine isopeptide (Lys-Gly) (interchain with G-Cter in SUMO2). 2 stretches are compositionally biased toward low complexity: residues 70-81 (SSPPSAGNSPSS) and 92-108 (SPGL…KKYS). Residues serine 71, serine 92, serine 101, serine 108, and serine 111 each carry the phosphoserine modification. Residues lysine 196 and lysine 198 each participate in a glycyl lysine isopeptide (Lys-Gly) (interchain with G-Cter in SUMO2) cross-link. Serine 216, serine 224, and serine 250 each carry phosphoserine. 3 consecutive C2H2-type zinc fingers follow at residues 260-284 (HRCD…RRTH), 290-314 (YKCT…FRKH), and 320-342 (FQCP…RKRH).

Belongs to the krueppel C2H2-type zinc-finger protein family. Monomer. In terms of processing, sumoylated with SUMO1. Sumoylation is enhanced by PIAS1, PIAS2alpha and PIAS2beta, and PIAS4, but not by Pc2. Enhances transcriptional repression, but has no effect on DNA binding. Sumoylation on Lys-198 is the major site.

The protein localises to the nucleus. Functionally, binds to the CACCC box of erythroid cell-expressed genes. May play a role in hematopoiesis. The protein is Krueppel-like factor 3 (KLF3) of Homo sapiens (Human).